A 254-amino-acid polypeptide reads, in one-letter code: Triosephosphate isomerase 2 (254 aa).

9–11 (NMK) contacts substrate. H96 functions as the Electrophile in the catalytic mechanism. The active-site Proton acceptor is E168. 2 residues coordinate substrate: G174 and S212.

Belongs to the triosephosphate isomerase family. In terms of assembly, homodimer.

The protein resides in the cytoplasm. It carries out the reaction D-glyceraldehyde 3-phosphate = dihydroxyacetone phosphate. The protein operates within polyol metabolism; glycerol degradation. Functionally, involved in the glycerol metabolism. Catalyzes stereospecifically the conversion of dihydroxyacetone phosphate (DHAP) to D-glyceraldehyde-3-phosphate (G3P). The chain is Triosephosphate isomerase 2 from Listeria innocua serovar 6a (strain ATCC BAA-680 / CLIP 11262).